We begin with the raw amino-acid sequence, 137 residues long: Putative pre-16S rRNA nuclease (137 aa).

It belongs to the YqgF nuclease family.

It is found in the cytoplasm. Its function is as follows. Could be a nuclease involved in processing of the 5'-end of pre-16S rRNA. This is Putative pre-16S rRNA nuclease from Anaeromyxobacter sp. (strain K).